A 289-amino-acid chain; its full sequence is Acetyl-coenzyme A carboxylase carboxyl transferase subunit beta (289 aa).

Positions 34-289 (MWVKCNKCGE…KLINMHQNSF (256 aa)) constitute a CoA carboxyltransferase N-terminal domain. 4 residues coordinate Zn(2+): Cys-38, Cys-41, Cys-57, and Cys-60. The segment at 38–60 (CNKCGEILYQNDLEKNYMVCNLC) adopts a C4-type zinc-finger fold.

It belongs to the AccD/PCCB family. Acetyl-CoA carboxylase is a heterohexamer composed of biotin carboxyl carrier protein (AccB), biotin carboxylase (AccC) and two subunits each of ACCase subunit alpha (AccA) and ACCase subunit beta (AccD). It depends on Zn(2+) as a cofactor.

The protein localises to the cytoplasm. The catalysed reaction is N(6)-carboxybiotinyl-L-lysyl-[protein] + acetyl-CoA = N(6)-biotinyl-L-lysyl-[protein] + malonyl-CoA. The protein operates within lipid metabolism; malonyl-CoA biosynthesis; malonyl-CoA from acetyl-CoA: step 1/1. Functionally, component of the acetyl coenzyme A carboxylase (ACC) complex. Biotin carboxylase (BC) catalyzes the carboxylation of biotin on its carrier protein (BCCP) and then the CO(2) group is transferred by the transcarboxylase to acetyl-CoA to form malonyl-CoA. This is Acetyl-coenzyme A carboxylase carboxyl transferase subunit beta from Clostridium botulinum (strain ATCC 19397 / Type A).